Consider the following 338-residue polypeptide: Cytochrome P450 monooxygenase easK (338 aa).

Positions Met1–Ala16 are cleaved as a signal peptide. N-linked (GlcNAc...) asparagine glycans are attached at residues Asn240 and Asn327.

This sequence belongs to the cytochrome P450 family. Heme is required as a cofactor.

Its pathway is alkaloid biosynthesis; ergot alkaloid biosynthesis. Its function is as follows. Cytochrome P450 monooxygenase; part of the gene cluster that mediates the biosynthesis of fumiclavanine C, a fungal ergot alkaloid. DmaW catalyzes the first step of ergot alkaloid biosynthesis by condensing dimethylallyl diphosphate (DMAP) and tryptophan to form 4-dimethylallyl-L-tryptophan. The second step is catalyzed by the methyltransferase easF that methylates 4-dimethylallyl-L-tryptophan in the presence of S-adenosyl-L-methionine, resulting in the formation of 4-dimethylallyl-L-abrine. The catalase easC and the FAD-dependent oxidoreductase easE then transform 4-dimethylallyl-L-abrine to chanoclavine-I which is further oxidized by EasD in the presence of NAD(+), resulting in the formation of chanoclavine-I aldehyde. EasA reduces chanoclavine-I aldehyde to dihydrochanoclavine-I aldehyde that spontaneously dehydrates to form 6,8-dimethyl-6,7-didehydroergoline. EasG then catalyzes the reduction of 6,8-dimethyl-6,7-didehydroergoline to form festuclavine. Hydrolysis of festuclavine by easM then leads to the formation of fumigaclavine B which is in turn acetylated by easN to fumigaclavine A. Finally, easL catalyzes the conversion of fumigaclavine A into fumigaclavine C by attaching a dimethylallyl moiety to C-2 of the indole nucleus. The role of the cytochrome P450 monooxygenase easK within the cluster has not been identified yet. This Aspergillus fumigatus (strain ATCC MYA-4609 / CBS 101355 / FGSC A1100 / Af293) (Neosartorya fumigata) protein is Cytochrome P450 monooxygenase easK.